The chain runs to 392 residues: Galactokinase (392 aa).

Alpha-D-galactose-binding residues include R37, E43, H44, and D46. ATP is bound by residues G136, G138, S140, and S141. Residue D186 participates in alpha-D-galactose binding. D186 functions as the Proton acceptor in the catalytic mechanism. S230 is modified (phosphoserine). Y236 provides a ligand contact to alpha-D-galactose.

It belongs to the GHMP kinase family. GalK subfamily. Homodimer.

It carries out the reaction alpha-D-galactose + ATP = alpha-D-galactose 1-phosphate + ADP + H(+). The protein operates within carbohydrate metabolism; galactose metabolism. Its function is as follows. Catalyzes the transfer of a phosphate from ATP to alpha-D-galactose and participates in the first committed step in the catabolism of galactose. This Canis lupus familiaris (Dog) protein is Galactokinase (GALK1).